We begin with the raw amino-acid sequence, 173 residues long: Phosphopantetheine adenylyltransferase (173 aa).

Thr-9 contacts substrate. ATP contacts are provided by residues 9–10 (TF) and His-17. Substrate-binding residues include Lys-41, Thr-75, and Arg-89. Residues 90–92 (GLR), Glu-100, and 125–131 (HIYLSSS) contribute to the ATP site.

It belongs to the bacterial CoaD family. Homohexamer. It depends on Mg(2+) as a cofactor.

The protein resides in the cytoplasm. The catalysed reaction is (R)-4'-phosphopantetheine + ATP + H(+) = 3'-dephospho-CoA + diphosphate. It participates in cofactor biosynthesis; coenzyme A biosynthesis; CoA from (R)-pantothenate: step 4/5. Functionally, reversibly transfers an adenylyl group from ATP to 4'-phosphopantetheine, yielding dephospho-CoA (dPCoA) and pyrophosphate. This is Phosphopantetheine adenylyltransferase from Methylacidiphilum infernorum (isolate V4) (Methylokorus infernorum (strain V4)).